The following is a 419-amino-acid chain: DNA primase DnaG (419 aa).

A Toprim domain is found at 174 to 260 (DAIIVVEGRS…EVEDLEKDEV (87 aa)). The Mg(2+) site is built by E180, D222, and D224. Positions 277–314 (HNILSESDSKNSHKKHNGKHNNKHSNNKHQQHETKVKE) are disordered. Residues 288–305 (SHKKHNGKHNNKHSNNKH) show a composition bias toward basic residues.

Belongs to the archaeal DnaG primase family. Forms a ternary complex with MCM helicase and DNA. Component of the archaeal exosome complex. It depends on Mg(2+) as a cofactor.

It catalyses the reaction ssDNA + n NTP = ssDNA/pppN(pN)n-1 hybrid + (n-1) diphosphate.. In terms of biological role, RNA polymerase that catalyzes the synthesis of short RNA molecules used as primers for DNA polymerase during DNA replication. Also part of the exosome, which is a complex involved in RNA degradation. Acts as a poly(A)-binding protein that enhances the interaction between heteromeric, adenine-rich transcripts and the exosome. This is DNA primase DnaG from Methanobrevibacter smithii (strain ATCC 35061 / DSM 861 / OCM 144 / PS).